The primary structure comprises 531 residues: Tryptophan biosynthesis protein TRP1 (531 aa).

The tract at residues 1–254 (MGNILEEIAA…TVKDLLQNVT (254 aa)) is indole-3-glycerol phosphate synthase. The segment at 255 to 531 (RHSESGEFAL…TLKIDEETEN (277 aa)) is N-(5'-phosphoribosyl)anthranilate isomerase.

It in the N-terminal section; belongs to the TrpC family. The protein in the C-terminal section; belongs to the TrpF family.

It catalyses the reaction N-(5-phospho-beta-D-ribosyl)anthranilate = 1-(2-carboxyphenylamino)-1-deoxy-D-ribulose 5-phosphate. The enzyme catalyses 1-(2-carboxyphenylamino)-1-deoxy-D-ribulose 5-phosphate + H(+) = (1S,2R)-1-C-(indol-3-yl)glycerol 3-phosphate + CO2 + H2O. The protein operates within amino-acid biosynthesis; L-tryptophan biosynthesis; L-tryptophan from chorismate: step 3/5. It participates in amino-acid biosynthesis; L-tryptophan biosynthesis; L-tryptophan from chorismate: step 4/5. Its function is as follows. Bifunctional enzyme that catalyzes two sequential steps of tryptophan biosynthetic pathway. This Phytophthora nicotianae (Potato buckeye rot agent) protein is Tryptophan biosynthesis protein TRP1 (TRP1).